Here is a 385-residue protein sequence, read N- to C-terminus: Putative glutamate--cysteine ligase 2 (385 aa).

This sequence belongs to the glutamate--cysteine ligase type 2 family. YbdK subfamily.

The catalysed reaction is L-cysteine + L-glutamate + ATP = gamma-L-glutamyl-L-cysteine + ADP + phosphate + H(+). ATP-dependent carboxylate-amine ligase which exhibits weak glutamate--cysteine ligase activity. The protein is Putative glutamate--cysteine ligase 2 of Solibacter usitatus (strain Ellin6076).